A 201-amino-acid chain; its full sequence is ADP-ribosylation factor-like protein 4D (201 aa).

G2 carries the N-myristoyl glycine lipid modification. GTP is bound by residues 28–35 (GLDSAGKT), 76–80 (DVGGQ), and 135–138 (NKQD).

Belongs to the small GTPase superfamily. Arf family. Interacts with CYTH2; the interaction is direct and ARL4D GTP-dependent. Does not interact with ARL4D.

The protein localises to the nucleus. It localises to the nucleolus. It is found in the cell membrane. Its subcellular location is the cytoplasm. In terms of biological role, small GTP-binding protein which cycles between an inactive GDP-bound and an active GTP-bound form, and the rate of cycling is regulated by guanine nucleotide exchange factors (GEF) and GTPase-activating proteins (GAP). GTP-binding protein that does not act as an allosteric activator of the cholera toxin catalytic subunit. Recruits CYTH1, CYTH2, CYTH3 and CYTH4 to the plasma membrane in GDP-bound form. The sequence is that of ADP-ribosylation factor-like protein 4D (ARL4D) from Homo sapiens (Human).